The primary structure comprises 149 residues: YbbR-like domain-containing protein in def 5'region (149 aa).

Residues 1 to 68 form the YbbR-like domain; the sequence is IPVEVLAQGA…LRPNRVRVVE (68 aa).

The protein is YbbR-like domain-containing protein in def 5'region of Thermus thermophilus.